The primary structure comprises 599 residues: Elongation factor 4 (599 aa).

The region spanning 2–184 (KNIRNFSIIA…RLVRDIPPPQ (183 aa)) is the tr-type G domain. Residues 14-19 (DHGKST) and 131-134 (NKID) contribute to the GTP site.

It belongs to the TRAFAC class translation factor GTPase superfamily. Classic translation factor GTPase family. LepA subfamily.

The protein localises to the cell inner membrane. It carries out the reaction GTP + H2O = GDP + phosphate + H(+). Functionally, required for accurate and efficient protein synthesis under certain stress conditions. May act as a fidelity factor of the translation reaction, by catalyzing a one-codon backward translocation of tRNAs on improperly translocated ribosomes. Back-translocation proceeds from a post-translocation (POST) complex to a pre-translocation (PRE) complex, thus giving elongation factor G a second chance to translocate the tRNAs correctly. Binds to ribosomes in a GTP-dependent manner. In Salmonella gallinarum (strain 287/91 / NCTC 13346), this protein is Elongation factor 4.